Reading from the N-terminus, the 299-residue chain is MLFDQIASNKRKTWILLLVFFLLLALVGYAVGYLFIRSGLGGLVIALIIGFIYALSMIFQSTEIVMSMNGAREVDEQTAPDLYHVVEDMALVAQIPMPRVFIIDDPALNAFATGSNPQNAAVAATSGLLAIMNREELEAVMGHEVSHIRNYDIRISTIAVALASAITMLSGMAGRMMWWGGAGRRRSDDDRDGNGLEIIMLVVSLLAIVLAPLAATLVQLAISRQREFLADASSVELTRNPQGMINALDKLDNSKPMSRHVDDASSALYINDPKKGGGFQKLFYTHPPISERIERLKQM.

The next 2 membrane-spanning stretches (helical) occupy residues Ile-15–Phe-35 and Gly-39–Phe-59. Residue His-143 coordinates Zn(2+). Residue Glu-144 is part of the active site. His-147 provides a ligand contact to Zn(2+). Transmembrane regions (helical) follow at residues Ile-158–Trp-178 and Ile-198–Val-218. Glu-227 is a Zn(2+) binding site.

Belongs to the peptidase M48B family. The cofactor is Zn(2+).

It is found in the cell membrane. The polypeptide is Protease HtpX homolog (Streptococcus pneumoniae (strain P1031)).